A 478-amino-acid polypeptide reads, in one-letter code: Glutamate--tRNA ligase (478 aa).

Positions 8–18 match the 'HIGH' region motif; sequence PSPTGYLHLGN. A 'KMSKS' region motif is present at residues 248–252; sequence KLSKR. K251 is an ATP binding site.

The protein belongs to the class-I aminoacyl-tRNA synthetase family. Glutamate--tRNA ligase type 1 subfamily. As to quaternary structure, monomer.

It localises to the cytoplasm. The enzyme catalyses tRNA(Glu) + L-glutamate + ATP = L-glutamyl-tRNA(Glu) + AMP + diphosphate. Its function is as follows. Catalyzes the attachment of glutamate to tRNA(Glu) in a two-step reaction: glutamate is first activated by ATP to form Glu-AMP and then transferred to the acceptor end of tRNA(Glu). This Sulfurihydrogenibium sp. (strain YO3AOP1) protein is Glutamate--tRNA ligase.